Here is a 391-residue protein sequence, read N- to C-terminus: Processive diacylglycerol beta-glucosyltransferase (391 aa).

Belongs to the glycosyltransferase 28 family. UgtP subfamily.

The protein resides in the cell membrane. The catalysed reaction is a 1,2-diacyl-3-O-(beta-D-glucopyranosyl)-sn-glycerol + UDP-alpha-D-glucose = a 1,2-diacyl-3-O-(beta-D-Glc-(1-&gt;6)-beta-D-Glc)-sn-glycerol + UDP + H(+). It carries out the reaction a 1,2-diacyl-sn-glycerol + UDP-alpha-D-glucose = a 1,2-diacyl-3-O-(beta-D-glucopyranosyl)-sn-glycerol + UDP + H(+). It participates in glycolipid metabolism; diglucosyl-diacylglycerol biosynthesis. Functionally, processive glucosyltransferase involved in the biosynthesis of both the bilayer- and non-bilayer-forming membrane glucolipids. Is able to successively transfer two glucosyl residues to diacylglycerol (DAG), thereby catalyzing the formation of beta-monoglucosyl-DAG (3-O-(beta-D-glucopyranosyl)-1,2-diacyl-sn-glycerol) and beta-diglucosyl-DAG (3-O-(beta-D-glucopyranosyl-beta-(1-&gt;6)-D-glucopyranosyl)-1,2-diacyl-sn-glycerol). Beta-diglucosyl-DAG is the predominant glycolipid found in Bacillales and is also used as a membrane anchor for lipoteichoic acid (LTA). This Staphylococcus epidermidis (strain ATCC 35984 / DSM 28319 / BCRC 17069 / CCUG 31568 / BM 3577 / RP62A) protein is Processive diacylglycerol beta-glucosyltransferase.